Consider the following 370-residue polypeptide: Phosphate-binding protein PstS 3 (370 aa).

Positions 1-22 are cleaved as a signal peptide; the sequence is MKLNRFGAAVGVLAAGALVLSA. The N-palmitoyl cysteine moiety is linked to residue C23. The S-diacylglycerol cysteine moiety is linked to residue C23. Phosphate-binding positions include 56–58, S86, D104, and 191–193; these read STA and SGT.

The protein belongs to the PstS family. The complex is composed of two ATP-binding proteins (PstB), two transmembrane proteins (PstC and PstA) and a solute-binding protein (PstS).

Its subcellular location is the cell membrane. Functionally, part of the ABC transporter complex PstSACB involved in phosphate import. The chain is Phosphate-binding protein PstS 3 (pstS3) from Mycobacterium bovis (strain ATCC BAA-935 / AF2122/97).